A 34-amino-acid polypeptide reads, in one-letter code: Dermaseptin-S2 (34 aa).

It belongs to the frog skin active peptide (FSAP) family. Dermaseptin subfamily. Expressed by the skin glands.

It is found in the secreted. In terms of biological role, potent antimicrobial peptide with activity against bacteria and protozoa. Also has activity against fungi. Probably acts by disturbing membrane functions with its amphipathic structure. The chain is Dermaseptin-S2 from Phyllomedusa sauvagei (Sauvage's leaf frog).